A 148-amino-acid chain; its full sequence is 15 kDa excretory/secretory protein (148 aa).

The first 19 residues, 1 to 19 (MFFAFAVLLIALATREAYG), serve as a signal peptide directing secretion.

The protein to T.colubriformis 30 kDa antigenic glycoprotein.

It localises to the secreted. The polypeptide is 15 kDa excretory/secretory protein (Haemonchus contortus (Barber pole worm)).